The sequence spans 289 residues: Nucleotide-binding protein FRAAL4592 (289 aa).

13-20 provides a ligand contact to ATP; sequence GLSGAGRS. Residue 64–67 coordinates GTP; the sequence is DVRG.

It belongs to the RapZ-like family.

Displays ATPase and GTPase activities. The protein is Nucleotide-binding protein FRAAL4592 of Frankia alni (strain DSM 45986 / CECT 9034 / ACN14a).